The following is a 301-amino-acid chain: Probable alpha-L-glutamate ligase 1 (301 aa).

The ATP-grasp domain maps to 104-287; that stretch reads LQLLSRKGIG…VTEPIVEYIE (184 aa). ATP-binding positions include Lys-141, 178 to 179, Asp-187, and 211 to 213; these read EY and RSN. Residues Asp-248, Glu-260, and Asn-262 each contribute to the Mg(2+) site. The Mn(2+) site is built by Asp-248, Glu-260, and Asn-262.

This sequence belongs to the RimK family. Mg(2+) is required as a cofactor. Requires Mn(2+) as cofactor.

The polypeptide is Probable alpha-L-glutamate ligase 1 (Shewanella oneidensis (strain ATCC 700550 / JCM 31522 / CIP 106686 / LMG 19005 / NCIMB 14063 / MR-1)).